Reading from the N-terminus, the 123-residue chain is Gamma-synuclein (123 aa).

Tandem repeats lie at residues glutamate 20–alanine 30 and glutamate 31–glycine 41. Residues glutamate 20–serine 67 form a 4 X 11 AA tandem repeats of [EGSA]-K-T-K-[EQ]-[GQ]-V-X(4) region. The 3; approximate repeat unit spans residues threonine 42–alanine 56. Residues glutamate 57–serine 67 form repeat 4. A phosphoserine mark is found at serine 67 and serine 72. Residues glycine 93–aspartate 123 form a disordered region. Residues glutamine 107–aspartate 123 show a composition bias toward basic and acidic residues. Serine 120 carries the post-translational modification Phosphoserine; by BARK1, CaMK2 and CK2.

It belongs to the synuclein family. As to quaternary structure, may be a centrosome-associated protein. Interacts with MYOC; affects its secretion and its aggregation. In terms of processing, phosphorylated. Phosphorylation by GRK5 appears to occur on residues distinct from the residue phosphorylated by other kinases. Specifically expressed in the peripheral nervous system. High expression in motoneurons of the brainstem. Also found in neurons of many other brain regions including the cerebellar cortex, thalamus, hypothalamus and CA1, CA2, CA3 and CA4 regions of the hippocampus.

The protein localises to the cytoplasm. Its subcellular location is the perinuclear region. It is found in the cytoskeleton. The protein resides in the microtubule organizing center. It localises to the centrosome. The protein localises to the spindle. In terms of biological role, plays a role in neurofilament network integrity. May be involved in modulating axonal architecture during development and in the adult. In vitro, increases the susceptibility of neurofilament-H to calcium-dependent proteases. May also function in modulating the keratin network in skin. Activates the MAPK and Elk-1 signal transduction pathway. The polypeptide is Gamma-synuclein (Sncg) (Rattus norvegicus (Rat)).